The chain runs to 239 residues: Fibroblast growth factor 3 (239 aa).

The N-terminal stretch at 1–17 is a signal peptide; the sequence is MGLIWLLLLSLLEPGWP. N-linked (GlcNAc...) asparagine glycosylation is present at N65. Residues 193–239 are disordered; the sequence is QLQSGLPRPPGKGVQPRRRRQKQSPDNLEPSHVQASRLGSQLEASAH. Positions 225–239 are enriched in polar residues; sequence VQASRLGSQLEASAH.

It belongs to the heparin-binding growth factors family. Interacts with FGFR1 and FGFR2. Affinity between fibroblast growth factors (FGFs) and their receptors is increased by heparan sulfate glycosaminoglycans that function as coreceptors.

It localises to the secreted. Functionally, plays an important role in the regulation of embryonic development, cell proliferation, and cell differentiation. Required for normal ear development. This is Fibroblast growth factor 3 (FGF3) from Homo sapiens (Human).